We begin with the raw amino-acid sequence, 239 residues long: Octanoyl-[acyl-carrier-protein]:protein N-octanoyltransferase LIPT2, mitochondrial (239 aa).

A mitochondrion-targeting transit peptide spans 1 to 18; the sequence is MSVPVLRVRRLGLVGYAE. The BPL/LPL catalytic domain maps to 37–217; the sequence is GSPGGALLLC…AFEEEFQCQL (181 aa). Substrate is bound by residues 81-88, 147-149, and 160-162; these read RGGLITFH, AIG, and GLA. Catalysis depends on Cys178, which acts as the Acyl-thioester intermediate. The tract at residues 220–239 is disordered; it reads EQNPEQNPVQNRPDRDAGPL.

Belongs to the LipB family.

The protein localises to the mitochondrion. The enzyme catalyses octanoyl-[ACP] + L-lysyl-[protein] = N(6)-octanoyl-L-lysyl-[protein] + holo-[ACP] + H(+). The protein operates within protein modification; protein lipoylation via endogenous pathway; protein N(6)-(lipoyl)lysine from octanoyl-[acyl-carrier-protein]: step 1/2. Its function is as follows. Catalyzes the transfer of endogenously produced octanoic acid from octanoyl-acyl-carrier-protein (octanoyl-ACP) onto the lipoyl domains of lipoate-dependent enzymes such as the protein H of the glycine cleavage system (GCSH). Lipoyl-ACP can also act as a substrate although octanoyl-ACP is likely to be the physiological substrate. The chain is Octanoyl-[acyl-carrier-protein]:protein N-octanoyltransferase LIPT2, mitochondrial (lipt2) from Xenopus tropicalis (Western clawed frog).